A 402-amino-acid polypeptide reads, in one-letter code: Flavohemoprotein (402 aa).

The 136-residue stretch at 1–136 (MLSAKTIEIV…IADAFISIEA (136 aa)) folds into the Globin domain. H85 is a binding site for heme b. Active-site charge relay system residues include Y95 and E135. The reductase stretch occupies residues 147-402 (GGWKDFRNFV…EFFGPATSLQ (256 aa)). Positions 150–260 (KDFRNFVIVK…SAPAGDFVLN (111 aa)) constitute an FAD-binding FR-type domain. Residues Y188 and 204–207 (RQYS) contribute to the FAD site. An NADP(+)-binding site is contributed by 273–278 (GVGITP). An FAD-binding site is contributed by 394–397 (FFGP).

It belongs to the globin family. Two-domain flavohemoproteins subfamily. In the C-terminal section; belongs to the flavoprotein pyridine nucleotide cytochrome reductase family. The cofactor is heme b. It depends on FAD as a cofactor.

The enzyme catalyses 2 nitric oxide + NADPH + 2 O2 = 2 nitrate + NADP(+) + H(+). It carries out the reaction 2 nitric oxide + NADH + 2 O2 = 2 nitrate + NAD(+) + H(+). Its function is as follows. Is involved in NO detoxification in an aerobic process, termed nitric oxide dioxygenase (NOD) reaction that utilizes O(2) and NAD(P)H to convert NO to nitrate, which protects the bacterium from various noxious nitrogen compounds. Therefore, plays a central role in the inducible response to nitrosative stress. This Bacillus cereus (strain ATCC 14579 / DSM 31 / CCUG 7414 / JCM 2152 / NBRC 15305 / NCIMB 9373 / NCTC 2599 / NRRL B-3711) protein is Flavohemoprotein.